The primary structure comprises 739 residues: Nucleoprotein (739 aa).

The stretch at 334-363 (VNVGEQYQQLREAATEAEKQLQQYAESREL) forms a coiled coil. The disordered stretch occupies residues 415-646 (PKTSGHYDDD…QDSDNTQPEH (232 aa)). Composition is skewed to low complexity over residues 449-458 (SQDTTIPDVV) and 504-514 (KGGQQKNSQKG). Polar residues predominate over residues 520-530 (RQTQSRPTQNI). Acidic residues predominate over residues 567 to 579 (EEADPLDDADDET). A compositionally biased stretch (basic and acidic residues) spans 611-638 (YRDHSEKKELPQDERQDQDHTQEARNQD).

It belongs to the filoviruses nucleoprotein family. In terms of assembly, homooligomer. Homomultimerizes to form the nucleocapsid. Binds to viral genomic RNA. Interacts with VP35 and VP30 to form the nucleocapsid. Interacts with host PPP2R5C; this interaction leads to VP30 dephosphorylation and viral transcription. Interacts with VP24; this interaction facilitates nucleocapsid assembly and genome packaging. Interacts with matrix protein VP40; this interaction allows recruitment of the nucleocapsid into progeny virions. Interacts with host STAU1. Interacts with host NXF1 (via RNA-binding domain); this interaction recruits NXF1 to the inclusion bodies were viral replication takes place, probably to export viral mRNA-NXF1 complexes from these sites. Interacts with host CCDC92; this interaction sequesters NP in the host cytoplasm. Interacts with host TRIM14. Phosphorylated and O-glycosylated by host. Acetylated by host EP300 in vitro.

It localises to the virion. The protein resides in the host cytoplasm. Oligomerizes into helical capsid to encapsidate the viral genome, protecting it from nucleases and the cellular innate immune response. VP35 binds to and stabilizes monomeric NP, keeping it soluble. Upon virus replication, NP is recruited to bind cooperatively viral genomic RNA and VP35 is released. The encapsidated genomic RNA is termed the nucleocapsid and serves as template for transcription and replication. The nucleocapsid is helical with a pitch of 10.81 NP per turn and a diameter of about 22nm. Each NP binds to six nucleotides of viral genomic RNA, three being exposed to the solvant and three hidden into the nucleocapsid. Also recruits host PPP2R5C phosphatase to dephosphorylate VP30 and thereby promote viral transcription. Upon virion assembly and budding, NP binds to VP24 and possibly host STAU1. This chain is Nucleoprotein (NP), found in Zaire ebolavirus (strain Gabon-94) (ZEBOV).